A 320-amino-acid polypeptide reads, in one-letter code: MAIVNVNHFLKEVESTDLKIDAIASSELYKDATFFKPDVLNCIKRFESNVKVSQGQGDGLVLSDFKLLDDTEIDSIRKKSNKYKYLHYGVILVGIKAMLPNFRGMEGRVIVYDGACLDPERGHICSYLFRFESDCCYFGLRPEHCLSTTDVNLAKRFRFRVDFDCPQYEQDTELFALDIGVAYRCVNSARFLETKTGDSGWASQAISGCEALKYNEEIKMAILDHKSPLFLEEGAPNVHIEKRMFRGDKIRRSRSISAKRGPNSRSKETRGFRSLSARIERFGKDEFGRRASTSEAPPGRSVSVEDTDRPGKGNSDGSSP.

Active-site residues include histidine 144, aspartate 171, and serine 199. The tract at residues 251–320 (RRSRSISAKR…GKGNSDGSSP (70 aa)) is disordered. Residues 278–289 (RIERFGKDEFGR) are compositionally biased toward basic and acidic residues.

Belongs to the tobamoviruses movement protein family.

Its function is as follows. May play a role in viral cell to cell movement by increasing the size exclusion limit of plasmodesmata and forming a complex with viral RNA to assist its movement. May also have a papain-like protease activity and cleave the genome polyprotein. The polypeptide is Putative movement protein (Malus sylvestris (European crab apple)).